Here is a 63-residue protein sequence, read N- to C-terminus: uncharacterized protein (63 aa).

This is an uncharacterized protein from Escherichia coli (strain K12).